We begin with the raw amino-acid sequence, 392 residues long: Speckle-type POZ protein-like A (392 aa).

One can recognise an MATH domain in the interval 31–161 (KFSYMWTINN…DDKLTLFCEV (131 aa)). Residues 200–267 (TDCSLYVGGQ…IYTGKAPNLE (68 aa)) enclose the BTB domain.

This sequence belongs to the Tdpoz family. In terms of assembly, homodimer. Heterodimer with SPOP. Component of cullin-RING-based BCR (BTB-CUL3-RBX1) E3 ubiquitin-protein ligase complexes containing homodimeric SPOPL or the heterodimer formed by SPOP and SPOPL.

It is found in the nucleus. The protein operates within protein modification; protein ubiquitination. Its function is as follows. Component of a cullin-RING-based BCR (BTB-CUL3-RBX1) E3 ubiquitin-protein ligase complex that mediates the ubiquitination and subsequent proteasomal degradation of target proteins, but with relatively low efficiency. This chain is Speckle-type POZ protein-like A (spopla), found in Danio rerio (Zebrafish).